Here is a 391-residue protein sequence, read N- to C-terminus: Multidrug resistance protein MdtL (391 aa).

The Cytoplasmic portion of the chain corresponds to 1–3 (MSR). The helical transmembrane segment at 4-24 (FLICSFALVLLYPAGIDMYLV) threads the bilayer. Topologically, residues 25–41 (GLPRIAADLNASEAQLH) are periplasmic. A helical transmembrane segment spans residues 42–62 (IAFSVYLAGMAAAMLFAGKVA). The Cytoplasmic segment spans residues 63–68 (DRSGRK). A helical transmembrane segment spans residues 69 to 89 (PVAIPGAALFIIASVFCSLAE). Over 90 to 92 (TSA) the chain is Periplasmic. The chain crosses the membrane as a helical span at residues 93–113 (LFLAGRFLQGLGAGCCYVVAF). Topologically, residues 114-130 (AILRDTLDDRRRAKVLS) are cytoplasmic. The helical transmembrane segment at 131–151 (LLNGITCIIPVLAPVLGHLIM) threads the bilayer. The Periplasmic portion of the chain corresponds to 152–157 (LKFPWQ). A helical membrane pass occupies residues 158–178 (SLFWTMATMGIAVLMLSLFIL). Residues 179–202 (KETRPAAPAASDKPRENSESLLNR) are Cytoplasmic-facing. A helical transmembrane segment spans residues 203–222 (FFLSRVVITTLSVSVILTFV). The Periplasmic segment spans residues 223–244 (NTSPVLLMEIMGFERGEYATIM). Residues 245–265 (ALTAGVSMTVSFSTPFALGIF) form a helical membrane-spanning segment. Residues 266–268 (KPR) are Cytoplasmic-facing. Residues 269–289 (TLMITSQVLFLAAGITLAVSP) traverse the membrane as a helical segment. The Periplasmic portion of the chain corresponds to 290–292 (SHA). A helical transmembrane segment spans residues 293–313 (VSLFGITLICAGFSVGFGVAM). Residues 314–330 (SQALGPFSLRAGVASST) are Cytoplasmic-facing. Residues 331-351 (LGIAQVCGSSLWIWLAAVVGI) traverse the membrane as a helical segment. The Periplasmic segment spans residues 352 to 355 (GAWN). The helical transmembrane segment at 356–376 (MLIGILIACSIVSLLLIMFVA) threads the bilayer. The Cytoplasmic portion of the chain corresponds to 377–391 (PGRPVAAHEEIHHHA).

Belongs to the major facilitator superfamily. DHA1 family. MdtL (TC 2.A.1.2.22) subfamily.

It is found in the cell inner membrane. Confers resistance to chloramphenicol. In Escherichia coli O6:K15:H31 (strain 536 / UPEC), this protein is Multidrug resistance protein MdtL.